Here is a 1006-residue protein sequence, read N- to C-terminus: Probable protein phosphatase DDB_G0279461 (1006 aa).

Positions 1–12 are enriched in polar residues; it reads MMVPSLSTSISS. 7 disordered regions span residues 1–119, 146–188, 214–269, 312–387, 459–513, 525–563, and 604–642; these read MMVP…NNKE, SHAS…RSNS, SSED…NGIR, DAES…PPNQ, NINN…NNIQ, DYNI…NSKF, and GSIP…TSAS. Residues 59–69 show a composition bias toward acidic residues; that stretch reads NEEEGTADNEL. Residues 65-122 are a coiled coil; the sequence is ADNELESLMSLVNDNNNNNNNTSGIDDDNNNDIDDNNNNNNNNNNNNNNNNNNKEGLN. Residues 77–88 are compositionally biased toward low complexity; the sequence is NDNNNNNNNTSG. The span at 89-99 shows a compositional bias: acidic residues; the sequence is IDDDNNNDIDD. Residues 100 to 117 show a composition bias toward low complexity; that stretch reads NNNNNNNNNNNNNNNNNN. A compositionally biased stretch (polar residues) spans 146-158; the sequence is SHASVSNQSSNGS. Composition is skewed to low complexity over residues 220 to 234, 244 to 254, and 316 to 387; these read SCHN…NKNN, NINNNNNNNCN, and NYNN…PPNQ. Positions 450-516 form a coiled coil; it reads KIDNLNKNIN…NNNNNIQDIQ (67 aa). Polar residues predominate over residues 466-481; that stretch reads TDSQQPLPSIDVNFSH. A compositionally biased stretch (low complexity) spans 482–511; sequence NNNNNNNDNDNNNNNNNNNNNNNNNNNNNN. Over residues 525 to 538 the composition is skewed to polar residues; that stretch reads DYNIQEGNDINNDN. 2 stretches are compositionally biased toward low complexity: residues 552 to 561 and 613 to 639; these read SSNNNNNNNS and NNNN…TTTT. Positions 744 to 1005 constitute a PPM-type phosphatase domain; that stretch reads DINKRGLKRA…DNISIIVVTL (262 aa). Mn(2+) contacts are provided by Asp-784, Gly-785, Asp-956, and Asp-996.

The protein in the C-terminal section; belongs to the PP2C family. The cofactor is Mg(2+). It depends on Mn(2+) as a cofactor.

It catalyses the reaction O-phospho-L-seryl-[protein] + H2O = L-seryl-[protein] + phosphate. It carries out the reaction O-phospho-L-threonyl-[protein] + H2O = L-threonyl-[protein] + phosphate. The sequence is that of Probable protein phosphatase DDB_G0279461 from Dictyostelium discoideum (Social amoeba).